A 122-amino-acid polypeptide reads, in one-letter code: MITQIDRKAIRMKKHKRVRKSVFGTAERPRLAVFRSLNHIYAQVINDELGVTLATASSLDAEFKAAELAGGNVEGAKKVGDLVAKRALEKGVSKVVFDRGGNIYHGRIAAVAEAAREAGLEF.

Belongs to the universal ribosomal protein uL18 family. As to quaternary structure, part of the 50S ribosomal subunit; part of the 5S rRNA/L5/L18/L25 subcomplex. Contacts the 5S and 23S rRNAs.

Its function is as follows. This is one of the proteins that bind and probably mediate the attachment of the 5S RNA into the large ribosomal subunit, where it forms part of the central protuberance. In Desulfitobacterium hafniense (strain Y51), this protein is Large ribosomal subunit protein uL18.